The following is a 138-amino-acid chain: Putative nickel-responsive regulator (138 aa).

Ni(2+) contacts are provided by histidine 76, histidine 87, histidine 89, and cysteine 95.

Belongs to the transcriptional regulatory CopG/NikR family. Requires Ni(2+) as cofactor.

Its function is as follows. Transcriptional regulator. This is Putative nickel-responsive regulator from Pseudomonas putida (strain ATCC 47054 / DSM 6125 / CFBP 8728 / NCIMB 11950 / KT2440).